A 279-amino-acid chain; its full sequence is Movement protein (279 aa).

It belongs to the cucumovirus movement protein family.

It localises to the host cell junction. It is found in the host plasmodesma. Functionally, transports viral genome to neighboring plant cells directly through plasmosdesmata, without any budding. The movement protein allows efficient cell to cell propagation, by bypassing the host cell wall barrier. Acts by forming a tubular structure at the host plasmodesmata, enlarging it enough to allow free passage of virion capsids. This chain is Movement protein, found in Cucumber mosaic virus (strain Kin) (CMV).